The primary structure comprises 1439 residues: Receptor-type tyrosine-protein phosphatase kappa (1439 aa).

A signal peptide spans 1–26 (MDTTAAAALPAFVALLLLSPWPLLGS). Over 27 to 752 (AQGQFSAGGC…PAKQTDRVVK (726 aa)) the chain is Extracellular. Residues 31–194 (FSAGGCTFDD…IQVLSYPCDK (164 aa)) enclose the MAM domain. 3 N-linked (GlcNAc...) asparagine glycosylation sites follow: Asn-101, Asn-140, and Asn-211. Positions 196 to 281 (PHFLRLGDVE…TQSERGSGVS (86 aa)) constitute an Ig-like C2-type domain. Cys-216 and Cys-270 are joined by a disulfide. Fibronectin type-III domains lie at 294–389 (PIAP…CAEP), 392–488 (TPKT…TDED), 491–595 (GPVP…SAPT), and 597–680 (PDYE…GNLP). 9 N-linked (GlcNAc...) asparagine glycosylation sites follow: Asn-416, Asn-424, Asn-436, Asn-462, Asn-552, Asn-586, Asn-590, Asn-607, and Asn-690. A helical membrane pass occupies residues 753–774 (IAGISAGILVFILLLLVVILIV). Topologically, residues 775–1439 (KKSKLAKKRK…DVALEYLESS (665 aa)) are cytoplasmic. Ser-856 carries the post-translational modification Phosphoserine. Tyrosine-protein phosphatase domains lie at 887-1141 (FKEE…ILEA) and 1173-1435 (LKDE…ALEY). Substrate is bound by residues Asp-1050, 1082-1088 (CSAGAGR), and Gln-1126. Cys-1082 serves as the catalytic Phosphocysteine intermediate. Cys-1376 functions as the Phosphocysteine intermediate in the catalytic mechanism.

The protein belongs to the protein-tyrosine phosphatase family. Receptor class 2B subfamily. Post-translationally, this protein undergoes proteolytic processing. As to expression, high levels in lung, brain and colon; less in liver, pancreas, stomach, kidney, placenta and mammary carcinoma.

The protein localises to the cell junction. Its subcellular location is the adherens junction. It is found in the cell membrane. The catalysed reaction is O-phospho-L-tyrosyl-[protein] + H2O = L-tyrosyl-[protein] + phosphate. Functionally, regulation of processes involving cell contact and adhesion such as growth control, tumor invasion, and metastasis. Negative regulator of EGFR signaling pathway. Forms complexes with beta-catenin and gamma-catenin/plakoglobin. Beta-catenin may be a substrate for the catalytic activity of PTPRK/PTP-kappa. The polypeptide is Receptor-type tyrosine-protein phosphatase kappa (PTPRK) (Homo sapiens (Human)).